The following is a 49-amino-acid chain: Defensin Tk-AMP-D1 (49 aa).

4 disulfides stabilise this stretch: Cys3-Cys49, Cys14-Cys34, Cys20-Cys43, and Cys24-Cys45.

Its function is as follows. Has weak antifungal activity against F.graminearum and F.verticillioides below 30 ug/ml, but not against A.consortiale B.cinerea, H.sativum, F.culmorum, C.graminicola and D.maydis. In Triticum kiharae (Wheat), this protein is Defensin Tk-AMP-D1.